A 29-amino-acid polypeptide reads, in one-letter code: Varv peptide D (29 aa).

The cyclopeptide (Gly-Asn) cross-link spans 1–29 (GLPICGETCVGGSCNTPGCSCSWPVCTRN). Cystine bridges form between C5-C19, C9-C21, and C14-C26.

Post-translationally, this is a cyclic peptide.

Functionally, probably participates in a plant defense mechanism. The chain is Varv peptide D from Viola arvensis (European field pansy).